Reading from the N-terminus, the 492-residue chain is Sestrin-3 (492 aa).

The tract at residues 62–243 is N-terminal domain; may mediate the alkylhydroperoxide reductase activity; it reads LVEEYSTSGR…VCDLANDNSI (182 aa). Cys-121 functions as the Cysteine sulfenic acid (-SOH) intermediate in the catalytic mechanism. Residues 310–492 form a C-terminal domain; mediates TORC1 regulation region; the sequence is PHSDFEDDVI…ALRAITRHLT (183 aa). L-leucine is bound by residues 386 to 389, Thr-398, and Glu-463; that span reads TYNT.

The protein belongs to the sestrin family. As to quaternary structure, interacts with the GATOR2 complex which is composed of MIOS, SEC13, SEH1L, WDR24 and WDR59; the interaction is not regulated by leucine. Interacts with RRAGA, RRAGB, RRAGC and RRAGD; may function as a guanine nucleotide dissociation inhibitor for RRAGs and regulate them. Interacts with the TORC2 complex; through RICTOR. In terms of tissue distribution, detected in liver and skeletal muscles.

Its subcellular location is the cytoplasm. It carries out the reaction a hydroperoxide + L-cysteinyl-[protein] = S-hydroxy-L-cysteinyl-[protein] + an alcohol. Functionally, may function as an intracellular leucine sensor that negatively regulates the TORC1 signaling pathway. May also regulate the insulin-receptor signaling pathway through activation of TORC2. This metabolic regulator may also play a role in protection against oxidative and genotoxic stresses. May prevent the accumulation of reactive oxygen species (ROS) through the alkylhydroperoxide reductase activity born by the N-terminal domain of the protein. This Mus musculus (Mouse) protein is Sestrin-3.